Here is a 103-residue protein sequence, read N- to C-terminus: Small ribosomal subunit protein uS10 (103 aa).

The protein belongs to the universal ribosomal protein uS10 family. As to quaternary structure, part of the 30S ribosomal subunit.

Involved in the binding of tRNA to the ribosomes. This Sphingopyxis alaskensis (strain DSM 13593 / LMG 18877 / RB2256) (Sphingomonas alaskensis) protein is Small ribosomal subunit protein uS10.